The primary structure comprises 332 residues: Anthranilate phosphoribosyltransferase (332 aa).

5-phospho-alpha-D-ribose 1-diphosphate-binding positions include glycine 79, 82-83, serine 87, 89-92, 107-115, and serine 119; these read GD, NIST, and KHGNRSVSS. Residue glycine 79 participates in anthranilate binding. Mg(2+) is bound at residue serine 91. Asparagine 110 serves as a coordination point for anthranilate. An anthranilate-binding site is contributed by arginine 165. 2 residues coordinate Mg(2+): aspartate 223 and glutamate 224.

Belongs to the anthranilate phosphoribosyltransferase family. Homodimer. Requires Mg(2+) as cofactor.

The enzyme catalyses N-(5-phospho-beta-D-ribosyl)anthranilate + diphosphate = 5-phospho-alpha-D-ribose 1-diphosphate + anthranilate. It participates in amino-acid biosynthesis; L-tryptophan biosynthesis; L-tryptophan from chorismate: step 2/5. Its function is as follows. Catalyzes the transfer of the phosphoribosyl group of 5-phosphorylribose-1-pyrophosphate (PRPP) to anthranilate to yield N-(5'-phosphoribosyl)-anthranilate (PRA). The chain is Anthranilate phosphoribosyltransferase from Yersinia pestis bv. Antiqua (strain Antiqua).